The chain runs to 20 residues: Citrate synthase (20 aa).

The protein belongs to the citrate synthase family. In terms of assembly, homodimer.

It catalyses the reaction oxaloacetate + acetyl-CoA + H2O = citrate + CoA + H(+). It functions in the pathway carbohydrate metabolism; tricarboxylic acid cycle; isocitrate from oxaloacetate: step 1/2. The sequence is that of Citrate synthase from Populus euphratica (Euphrates poplar).